The chain runs to 276 residues: Small ribosomal subunit protein uS2 (276 aa).

Residues 251–276 (AEEAPAAAEEAPAAEPAAEETPAAEA) are disordered. Residues 252 to 276 (EEAPAAAEEAPAAEPAAEETPAAEA) show a composition bias toward low complexity.

This sequence belongs to the universal ribosomal protein uS2 family.

This Jannaschia sp. (strain CCS1) protein is Small ribosomal subunit protein uS2.